Consider the following 195-residue polypeptide: Holliday junction branch migration complex subunit RuvA (195 aa).

Residues 1–61 (MYEYFEGIIS…DTGITLYGFQ (61 aa)) form a domain I region. Positions 62 to 140 (DQDDKGLFLK…DYVARLDKPE (79 aa)) are domain II. The flexible linker stretch occupies residues 141 to 146 (NGEEIS). The domain III stretch occupies residues 146 to 195 (SPALNDALLALIALGYTQKEVDRITPKLVEIEADTADQYIKKGLALLLKK).

Belongs to the RuvA family. As to quaternary structure, homotetramer. Forms an RuvA(8)-RuvB(12)-Holliday junction (HJ) complex. HJ DNA is sandwiched between 2 RuvA tetramers; dsDNA enters through RuvA and exits via RuvB. An RuvB hexamer assembles on each DNA strand where it exits the tetramer. Each RuvB hexamer is contacted by two RuvA subunits (via domain III) on 2 adjacent RuvB subunits; this complex drives branch migration. In the full resolvosome a probable DNA-RuvA(4)-RuvB(12)-RuvC(2) complex forms which resolves the HJ.

The protein localises to the cytoplasm. Functionally, the RuvA-RuvB-RuvC complex processes Holliday junction (HJ) DNA during genetic recombination and DNA repair, while the RuvA-RuvB complex plays an important role in the rescue of blocked DNA replication forks via replication fork reversal (RFR). RuvA specifically binds to HJ cruciform DNA, conferring on it an open structure. The RuvB hexamer acts as an ATP-dependent pump, pulling dsDNA into and through the RuvAB complex. HJ branch migration allows RuvC to scan DNA until it finds its consensus sequence, where it cleaves and resolves the cruciform DNA. The sequence is that of Holliday junction branch migration complex subunit RuvA from Lactobacillus acidophilus (strain ATCC 700396 / NCK56 / N2 / NCFM).